The chain runs to 497 residues: RNA-splicing ligase RtcB homolog (497 aa).

Residues Asp111, Cys114, His219, His251, and His345 each contribute to the Mn(2+) site. 218-222 provides a ligand contact to GMP; sequence NHYAE. GMP-binding positions include 345–346, 394–397, Ser401, 420–423, and Lys496; these read HN, GGTM, and HGAG. Residue His420 is the GMP-histidine intermediate of the active site.

This sequence belongs to the RtcB family. Catalytic component of the tRNA-splicing ligase complex. Mn(2+) serves as cofactor.

It catalyses the reaction a 3'-end 3'-phospho-ribonucleotide-RNA + a 5'-end dephospho-ribonucleoside-RNA + GTP = a ribonucleotidyl-ribonucleotide-RNA + GMP + diphosphate. The catalysed reaction is a 3'-end 2',3'-cyclophospho-ribonucleotide-RNA + a 5'-end dephospho-ribonucleoside-RNA + GTP + H2O = a ribonucleotidyl-ribonucleotide-RNA + GMP + diphosphate + H(+). Functionally, catalytic subunit of the tRNA-splicing ligase complex that acts by directly joining spliced tRNA halves to mature-sized tRNAs by incorporating the precursor-derived splice junction phosphate into the mature tRNA as a canonical 3',5'-phosphodiester. May act as an RNA ligase with broad substrate specificity, and may function toward other RNAs. This is RNA-splicing ligase RtcB homolog from Monosiga brevicollis (Choanoflagellate).